The chain runs to 428 residues: Enolase (428 aa).

Residue Gln-163 participates in (2R)-2-phosphoglycerate binding. Glu-205 (proton donor) is an active-site residue. Mg(2+)-binding residues include Asp-242, Glu-285, and Asp-312. 4 residues coordinate (2R)-2-phosphoglycerate: Lys-337, Arg-366, Ser-367, and Lys-388. Lys-337 functions as the Proton acceptor in the catalytic mechanism.

The protein belongs to the enolase family. The cofactor is Mg(2+).

Its subcellular location is the cytoplasm. It is found in the secreted. The protein localises to the cell surface. It carries out the reaction (2R)-2-phosphoglycerate = phosphoenolpyruvate + H2O. It functions in the pathway carbohydrate degradation; glycolysis; pyruvate from D-glyceraldehyde 3-phosphate: step 4/5. Functionally, catalyzes the reversible conversion of 2-phosphoglycerate (2-PG) into phosphoenolpyruvate (PEP). It is essential for the degradation of carbohydrates via glycolysis. The chain is Enolase from Nitrosomonas eutropha (strain DSM 101675 / C91 / Nm57).